Reading from the N-terminus, the 501-residue chain is Ribose import ATP-binding protein RbsA (501 aa).

ABC transporter domains follow at residues 5-241 (LQLK…VGRK) and 252-495 (APGE…VGKL). Residue 37 to 44 (GENGAGKS) coordinates ATP.

It belongs to the ABC transporter superfamily. Ribose importer (TC 3.A.1.2.1) family. The complex is composed of an ATP-binding protein (RbsA), two transmembrane proteins (RbsC) and a solute-binding protein (RbsB).

Its subcellular location is the cell inner membrane. It carries out the reaction D-ribose(out) + ATP + H2O = D-ribose(in) + ADP + phosphate + H(+). Part of the ABC transporter complex RbsABC involved in ribose import. Responsible for energy coupling to the transport system. This Salmonella typhimurium (strain LT2 / SGSC1412 / ATCC 700720) protein is Ribose import ATP-binding protein RbsA.